The sequence spans 255 residues: uncharacterized protein (255 aa).

This is an uncharacterized protein from Paracoccus denitrificans.